The following is a 231-amino-acid chain: 7-cyano-7-deazaguanine synthase (231 aa).

8 to 18 (FSGGQDSTTCL) serves as a coordination point for ATP. The Zn(2+) site is built by C188, C197, C200, and C203.

This sequence belongs to the QueC family. Zn(2+) is required as a cofactor.

It carries out the reaction 7-carboxy-7-deazaguanine + NH4(+) + ATP = 7-cyano-7-deazaguanine + ADP + phosphate + H2O + H(+). Its pathway is purine metabolism; 7-cyano-7-deazaguanine biosynthesis. In terms of biological role, catalyzes the ATP-dependent conversion of 7-carboxy-7-deazaguanine (CDG) to 7-cyano-7-deazaguanine (preQ(0)). This chain is 7-cyano-7-deazaguanine synthase, found in Cronobacter sakazakii (strain ATCC BAA-894) (Enterobacter sakazakii).